The chain runs to 146 residues: Hemoglobin subunit beta (146 aa).

Val-1 bears the N-acetylvaline mark. A Globin domain is found at 2-146 (HMTDAEKKLV…VANALAHKYH (145 aa)). At Thr-12 the chain carries Phosphothreonine. At Lys-59 the chain carries N6-acetyllysine. His-63 serves as a coordination point for heme b. Lys-82 is modified (N6-acetyllysine). Heme b is bound at residue His-92. An S-nitrosocysteine modification is found at Cys-93. N6-acetyllysine is present on Lys-144.

The protein belongs to the globin family. Tetramer of two alpha and two different beta chains. Two external cysteine residues at beta-16 and beta-52 cause reversible polymerization to octamers and most likely irreversible formation of higher polymers. In terms of tissue distribution, red blood cells.

Functionally, involved in oxygen transport from the lung to the various peripheral tissues. The protein is Hemoglobin subunit beta (HBB) of Echinops telfairi (Lesser hedgehog tenrec).